The sequence spans 141 residues: Hemoglobin subunit alpha (141 aa).

The region spanning 1–141 (VLSPADKTNV…VSTVLTSKYR (141 aa)) is the Globin domain. Serine 3 carries the post-translational modification Phosphoserine. The residue at position 7 (lysine 7) is an N6-succinyllysine. Phosphothreonine is present on threonine 8. Residue lysine 11 is modified to N6-succinyllysine. Residue lysine 16 is modified to N6-acetyllysine; alternate. At lysine 16 the chain carries N6-succinyllysine; alternate. Tyrosine 24 is modified (phosphotyrosine). Serine 35 carries the phosphoserine modification. Position 40 is an N6-succinyllysine (lysine 40). A Phosphoserine modification is found at serine 49. Histidine 58 serves as a coordination point for O2. Histidine 87 contributes to the heme b binding site. At serine 102 the chain carries Phosphoserine. Threonine 108 carries the phosphothreonine modification. 2 positions are modified to phosphoserine: serine 124 and serine 131. Phosphothreonine is present on residues threonine 134 and threonine 137. Phosphoserine is present on serine 138.

It belongs to the globin family. As to quaternary structure, heterotetramer of two alpha chains and two beta chains. In terms of tissue distribution, red blood cells.

Involved in oxygen transport from the lung to the various peripheral tissues. Its function is as follows. Hemopressin acts as an antagonist peptide of the cannabinoid receptor CNR1. Hemopressin-binding efficiently blocks cannabinoid receptor CNR1 and subsequent signaling. The polypeptide is Hemoglobin subunit alpha (HBA) (Gorilla gorilla gorilla (Western lowland gorilla)).